We begin with the raw amino-acid sequence, 80 residues long: Exodeoxyribonuclease 7 small subunit (80 aa).

This sequence belongs to the XseB family. In terms of assembly, heterooligomer composed of large and small subunits.

It localises to the cytoplasm. It catalyses the reaction Exonucleolytic cleavage in either 5'- to 3'- or 3'- to 5'-direction to yield nucleoside 5'-phosphates.. Functionally, bidirectionally degrades single-stranded DNA into large acid-insoluble oligonucleotides, which are then degraded further into small acid-soluble oligonucleotides. This is Exodeoxyribonuclease 7 small subunit from Pseudomonas putida (strain W619).